The chain runs to 225 residues: Urease accessory protein UreG 2 (225 aa).

31–38 (GPVGSGKT) lines the GTP pocket.

This sequence belongs to the SIMIBI class G3E GTPase family. UreG subfamily. As to quaternary structure, homodimer. UreD, UreF and UreG form a complex that acts as a GTP-hydrolysis-dependent molecular chaperone, activating the urease apoprotein by helping to assemble the nickel containing metallocenter of UreC. The UreE protein probably delivers the nickel.

The protein resides in the cytoplasm. Its function is as follows. Facilitates the functional incorporation of the urease nickel metallocenter. This process requires GTP hydrolysis, probably effectuated by UreG. This is Urease accessory protein UreG 2 from Streptomyces griseus subsp. griseus (strain JCM 4626 / CBS 651.72 / NBRC 13350 / KCC S-0626 / ISP 5235).